Reading from the N-terminus, the 450-residue chain is Cytidylate cyclase (450 aa).

A Guanylate cyclase domain is found at 97–236 (VTMFVDIRKS…LPVDMTAKLQ (140 aa)). Position 100 (F100) interacts with a ribonucleoside 5'-triphosphate. 3 residues coordinate Mn(2+): D102, I103, and D146. Residues 318–450 (PNQFNFECFV…YRNIIGVYIK (133 aa)) form an AGS-C domain region.

This sequence belongs to the adenylyl cyclase class-4/guanylyl cyclase family. Pyrimidine cyclase subfamily. As to quaternary structure, homodimer. Requires Mn(2+) as cofactor.

Its subcellular location is the cytoplasm. The catalysed reaction is CTP = 3',5'-cyclic CMP + diphosphate. With respect to regulation, in E.coli strain MG1655 transformed with both genes cCMP appears between 15 and 30 minutes after infection with phage T5 (at protein level). No cCMP accumulates in uninfected cells. Its function is as follows. Pycsar (pyrimidine cyclase system for antiphage resistance) provides immunity against bacteriophage. The pyrimidine cyclase (PycC) synthesizes cyclic nucleotides in response to infection; these serve as specific second messenger signals. The signal activates the adjacent effector, leading to bacterial cell death and abortive phage infection. A clade E Pycsar system. Functionally, the pyrimidine cyclase gene of a two-gene Pycsar system, generates cyclic CMP (cCMP) from CTP in response to bacteriophage infection. Has little to no activity on ATP, GTP or UTP. Expression of this and adjacent effector EcPycTM (AC P0DV25) confers resistance to bacteriophage P1 and T5; expression of this gene alone does not confer resistance. When cells expressing the Pycsar system are infected by phage T5 at low multiplicity of infection (0.2 MOI) the culture survives, at 2.0 MOI bacteria enter growth arrest. The same cells enter growth arrest after exposure to 250 uM cCMP but not cUMP; thus the effector protein responds only to the cNMP produced by its cognate NTP cyclase. Some of the cells treated with cCMP have abnormal membrane protrusions. The sequence is that of Cytidylate cyclase from Escherichia coli.